A 331-amino-acid polypeptide reads, in one-letter code: Malate dehydrogenase (331 aa).

Residue 14–20 (GAAGSIG) participates in NAD(+) binding. Residues Arg95 and Arg101 each contribute to the substrate site. NAD(+)-binding positions include Asn108, Gln115, and 132–134 (VGN). Substrate-binding residues include Asn134 and Arg165. His190 functions as the Proton acceptor in the catalytic mechanism.

It belongs to the LDH/MDH superfamily. MDH type 2 family.

It carries out the reaction (S)-malate + NAD(+) = oxaloacetate + NADH + H(+). Functionally, catalyzes the reversible oxidation of malate to oxaloacetate. This is Malate dehydrogenase from Rhodococcus jostii (strain RHA1).